We begin with the raw amino-acid sequence, 426 residues long: Serine hydroxymethyltransferase (426 aa).

(6S)-5,6,7,8-tetrahydrofolate is bound by residues leucine 113 and glycine 117–leucine 119. At lysine 222 the chain carries N6-(pyridoxal phosphate)lysine. Serine 363 to phenylalanine 365 is a (6S)-5,6,7,8-tetrahydrofolate binding site.

This sequence belongs to the SHMT family. As to quaternary structure, homodimer. Pyridoxal 5'-phosphate is required as a cofactor.

Its subcellular location is the cytoplasm. It carries out the reaction (6R)-5,10-methylene-5,6,7,8-tetrahydrofolate + glycine + H2O = (6S)-5,6,7,8-tetrahydrofolate + L-serine. It functions in the pathway one-carbon metabolism; tetrahydrofolate interconversion. It participates in amino-acid biosynthesis; glycine biosynthesis; glycine from L-serine: step 1/1. Catalyzes the reversible interconversion of serine and glycine with tetrahydrofolate (THF) serving as the one-carbon carrier. This reaction serves as the major source of one-carbon groups required for the biosynthesis of purines, thymidylate, methionine, and other important biomolecules. Also exhibits THF-independent aldolase activity toward beta-hydroxyamino acids, producing glycine and aldehydes, via a retro-aldol mechanism. This is Serine hydroxymethyltransferase from Azobacteroides pseudotrichonymphae genomovar. CFP2.